A 238-amino-acid polypeptide reads, in one-letter code: Pyridoxine 5'-phosphate synthase (238 aa).

A 3-amino-2-oxopropyl phosphate-binding site is contributed by Asn-9. 11 to 12 (DH) is a 1-deoxy-D-xylulose 5-phosphate binding site. Arg-20 serves as a coordination point for 3-amino-2-oxopropyl phosphate. Residue His-45 is the Proton acceptor of the active site. The 1-deoxy-D-xylulose 5-phosphate site is built by Arg-47 and His-52. Glu-72 serves as the catalytic Proton acceptor. 1-deoxy-D-xylulose 5-phosphate is bound at residue Thr-102. The active-site Proton donor is the His-189. 3-amino-2-oxopropyl phosphate contacts are provided by residues Gly-190 and 211–212 (GH).

This sequence belongs to the PNP synthase family. In terms of assembly, homooctamer; tetramer of dimers.

It localises to the cytoplasm. It carries out the reaction 3-amino-2-oxopropyl phosphate + 1-deoxy-D-xylulose 5-phosphate = pyridoxine 5'-phosphate + phosphate + 2 H2O + H(+). It functions in the pathway cofactor biosynthesis; pyridoxine 5'-phosphate biosynthesis; pyridoxine 5'-phosphate from D-erythrose 4-phosphate: step 5/5. Its function is as follows. Catalyzes the complicated ring closure reaction between the two acyclic compounds 1-deoxy-D-xylulose-5-phosphate (DXP) and 3-amino-2-oxopropyl phosphate (1-amino-acetone-3-phosphate or AAP) to form pyridoxine 5'-phosphate (PNP) and inorganic phosphate. This Ehrlichia ruminantium (strain Gardel) protein is Pyridoxine 5'-phosphate synthase.